A 166-amino-acid polypeptide reads, in one-letter code: 3-isopropylmalate dehydratase small subunit (166 aa).

It belongs to the LeuD family. LeuD type 2 subfamily. Heterodimer of LeuC and LeuD.

It catalyses the reaction (2R,3S)-3-isopropylmalate = (2S)-2-isopropylmalate. It participates in amino-acid biosynthesis; L-leucine biosynthesis; L-leucine from 3-methyl-2-oxobutanoate: step 2/4. Functionally, catalyzes the isomerization between 2-isopropylmalate and 3-isopropylmalate, via the formation of 2-isopropylmaleate. The sequence is that of 3-isopropylmalate dehydratase small subunit from Nautilia profundicola (strain ATCC BAA-1463 / DSM 18972 / AmH).